Consider the following 156-residue polypeptide: Small ribosomal subunit protein uS7 (156 aa).

The protein belongs to the universal ribosomal protein uS7 family. As to quaternary structure, part of the 30S ribosomal subunit. Contacts proteins S9 and S11.

One of the primary rRNA binding proteins, it binds directly to 16S rRNA where it nucleates assembly of the head domain of the 30S subunit. Is located at the subunit interface close to the decoding center, probably blocks exit of the E-site tRNA. This chain is Small ribosomal subunit protein uS7, found in Acholeplasma laidlawii (strain PG-8A).